We begin with the raw amino-acid sequence, 245 residues long: U21-ctenitoxin-Pn1a (245 aa).

Residues 1-245 enclose the Peptidase S1 domain; the sequence is IVYGTVTTPG…FRSWMDKVMT (245 aa). A disulfide bridge links Cys30 with Cys46. Active-site charge relay system residues include His45 and Asp95. Disulfide bonds link Cys161–Cys183 and Cys192–Cys221. Ser196 (charge relay system) is an active-site residue.

In terms of tissue distribution, expressed by the venom gland.

The protein resides in the secreted. Protease. Hydrolyzes gelatin and succinyl casein. The protein is U21-ctenitoxin-Pn1a of Phoneutria nigriventer (Brazilian armed spider).